Reading from the N-terminus, the 222-residue chain is Large ribosomal subunit protein uL4 (222 aa).

The segment at 67–87 (QKGTGNARAGSKRTNVRRGGG) is disordered.

This sequence belongs to the universal ribosomal protein uL4 family. As to quaternary structure, part of the 50S ribosomal subunit.

One of the primary rRNA binding proteins, this protein initially binds near the 5'-end of the 23S rRNA. It is important during the early stages of 50S assembly. It makes multiple contacts with different domains of the 23S rRNA in the assembled 50S subunit and ribosome. In terms of biological role, forms part of the polypeptide exit tunnel. This Rhodopirellula baltica (strain DSM 10527 / NCIMB 13988 / SH1) protein is Large ribosomal subunit protein uL4.